The sequence spans 216 residues: MKLTWIKCMSKTERISDIDEPRLFEENGVEAHIAAFVMPLLKPLGFRLVRVKLLGLNGLTLQIMVERPDGSMTVEDCETVSRTVSPLLDVQNVIERKYHLEISSPGIDRPLVRKSDFFHWQGHIAKIETKIILEGRRKFRGTLTNITQDGFTLNTDKAAYGESMYISIPFDDIIDAHLVLTDELIRDALKKNKDLSQQFISEDNQKLSKQERNYKN.

Belongs to the RimP family.

It localises to the cytoplasm. Its function is as follows. Required for maturation of 30S ribosomal subunits. This chain is Ribosome maturation factor RimP, found in Bartonella henselae (strain ATCC 49882 / DSM 28221 / CCUG 30454 / Houston 1) (Rochalimaea henselae).